Reading from the N-terminus, the 584-residue chain is uncharacterized protein (584 aa).

A helical transmembrane segment spans residues Phe-15–Leu-35. Polar residues-rich tracts occupy residues Asp-184–Asn-194 and Gly-204–Ile-225. Positions Asp-184–Ser-226 are disordered. Coiled coils occupy residues Asp-267 to Pro-319 and Arg-436 to Arg-477.

It is found in the membrane. This is an uncharacterized protein from Plasmodium falciparum (isolate 3D7).